The primary structure comprises 51 residues: Ovomucoid (51 aa).

The Kazal-like domain maps to 3-51; sequence IDCSGYPKPACTLEFFPLCGSDNQTYSNKCAFCNAAVEKNVTLNHIGEC. Disulfide bonds link cysteine 5–cysteine 35, cysteine 13–cysteine 32, and cysteine 21–cysteine 51. Asparagine 42 carries an N-linked (GlcNAc...) asparagine glycan.

Its subcellular location is the secreted. The chain is Ovomucoid from Eudromia elegans (Elegant crested-tinamou).